Reading from the N-terminus, the 299-residue chain is Inosose dehydratase (299 aa).

Belongs to the IolE/MocC family. It depends on glutathione as a cofactor. The cofactor is Co(2+). Mn(2+) serves as cofactor.

It carries out the reaction scyllo-inosose = 3D-3,5/4-trihydroxycyclohexane-1,2-dione + H2O. Catalyzes the dehydration of inosose (2-keto-myo-inositol, 2KMI or 2,4,6/3,5-pentahydroxycyclohexanone) to 3D-(3,5/4)-trihydroxycyclohexane-1,2-dione (D-2,3-diketo-4-deoxy-epi-inositol). This is Inosose dehydratase from Klebsiella pneumoniae (strain 342).